A 119-amino-acid chain; its full sequence is MTRVKRGIIARKRRQKILNMNKGFRGAASVLFRTANQRYMKSLRSAYENRHNKKRNFRKLWISRLNSAVRLNGLNYSQFVYMLKKSGIILNRKILSQLSICDPQIFHELYSYIASKNLI.

It belongs to the bacterial ribosomal protein bL20 family.

Its subcellular location is the plastid. It is found in the chloroplast. Functionally, binds directly to 23S ribosomal RNA and is necessary for the in vitro assembly process of the 50S ribosomal subunit. It is not involved in the protein synthesizing functions of that subunit. The protein is Large ribosomal subunit protein bL20c of Oedogonium cardiacum (Filamentous green alga).